The primary structure comprises 3660 residues: Dystrophin (3660 aa).

The segment at 1 to 244 (MSAHVLWYEE…YVTSLFQVLP (244 aa)) is actin-binding. 2 consecutive Calponin-homology (CH) domains span residues 19-123 (DVQK…LHWQ) and 138-244 (TNSE…QVLP). Spectrin repeat units follow at residues 341-449 (MDLD…NLHK), 450-558 (ILMD…LLQD), 561-669 (RKWQ…QVSQ), 721-830 (EIRK…WLEY), 832-936 (NSII…QLQT), 945-1047 (RYKD…KLED), 1050-1156 (TKLQ…ALKG), 1159-1265 (DKTV…TLEE), 1268-1369 (ACWH…SLEQ), 1470-1570 (EQRL…ELEK), 1573-1678 (KLSR…LLME), 1681-1782 (KHME…FIPL), 1879-1981 (HQWY…TVLE), 2013-2103 (LSEV…RFDK), 2106-2211 (EKWR…RIEE), 2214-2321 (NILS…EIEI), 2472-2574 (FNKA…QLHE), 2577-2683 (KDST…ALES), 2686-2799 (LMLQ…HLEA), 2802-2904 (DQWK…LRRQ), 2906-2928 (DDVR…KIDD), and 2931-3037 (ERLQ…QLHE). One can recognise a WW domain in the interval 3052–3085 (TSVQGPWERAISPNKVPYYINHETQTTCWDHPKM). The segment at 3305–3361 (KHQAKCNICKECPIIGFRYRSLKHFNYDICQSCFFSGRVAKGHKMHYPMVEYCTPTT) adopts a ZZ-type; degenerate zinc-finger fold. Cys-3310, Cys-3313, Cys-3334, and Cys-3337 together coordinate Zn(2+). Disordered stretches follow at residues 3503 to 3526 (KQQH…VSPQ) and 3575 to 3660 (PQAD…EATM). 2 stretches are compositionally biased toward polar residues: residues 3582–3601 (NGTT…SSQP) and 3637–3647 (QLNNSFPSSRG).

Its subcellular location is the cell membrane. The protein localises to the sarcolemma. It localises to the cytoplasm. It is found in the cytoskeleton. The protein resides in the postsynaptic cell membrane. Its function is as follows. May play a role in anchoring the cytoskeleton to the plasma membrane. This is Dystrophin (DMD) from Gallus gallus (Chicken).